Here is a 279-residue protein sequence, read N- to C-terminus: Movement protein (279 aa).

The protein belongs to the cucumovirus movement protein family.

The protein resides in the host cell junction. The protein localises to the host plasmodesma. Transports viral genome to neighboring plant cells directly through plasmosdesmata, without any budding. The movement protein allows efficient cell to cell propagation, by bypassing the host cell wall barrier. Acts by forming a tubular structure at the host plasmodesmata, enlarging it enough to allow free passage of virion capsids. This Cucumber mosaic virus (strain Ixora) (CMV) protein is Movement protein.